The chain runs to 459 residues: Phosphoglucosamine mutase (459 aa).

S105 serves as the catalytic Phosphoserine intermediate. Mg(2+) is bound by residues S105, D252, D254, and D256. S105 is subject to Phosphoserine.

It belongs to the phosphohexose mutase family. Requires Mg(2+) as cofactor. Post-translationally, activated by phosphorylation.

It carries out the reaction alpha-D-glucosamine 1-phosphate = D-glucosamine 6-phosphate. In terms of biological role, catalyzes the conversion of glucosamine-6-phosphate to glucosamine-1-phosphate. The protein is Phosphoglucosamine mutase of Bifidobacterium adolescentis (strain ATCC 15703 / DSM 20083 / NCTC 11814 / E194a).